Consider the following 271-residue polypeptide: 4-hydroxy-tetrahydrodipicolinate reductase (271 aa).

Residues 12–17 and glutamate 38 contribute to the NAD(+) site; that span reads GGSGRM. Position 39 (arginine 39) interacts with NADP(+). NAD(+) contacts are provided by residues 102-104 and 126-129; these read GTT and APNM. Histidine 159 serves as the catalytic Proton donor/acceptor. Histidine 160 contributes to the (S)-2,3,4,5-tetrahydrodipicolinate binding site. Lysine 163 serves as the catalytic Proton donor. 169 to 170 contributes to the (S)-2,3,4,5-tetrahydrodipicolinate binding site; the sequence is GT.

The protein belongs to the DapB family.

It is found in the cytoplasm. It catalyses the reaction (S)-2,3,4,5-tetrahydrodipicolinate + NAD(+) + H2O = (2S,4S)-4-hydroxy-2,3,4,5-tetrahydrodipicolinate + NADH + H(+). The catalysed reaction is (S)-2,3,4,5-tetrahydrodipicolinate + NADP(+) + H2O = (2S,4S)-4-hydroxy-2,3,4,5-tetrahydrodipicolinate + NADPH + H(+). Its pathway is amino-acid biosynthesis; L-lysine biosynthesis via DAP pathway; (S)-tetrahydrodipicolinate from L-aspartate: step 4/4. Catalyzes the conversion of 4-hydroxy-tetrahydrodipicolinate (HTPA) to tetrahydrodipicolinate. This is 4-hydroxy-tetrahydrodipicolinate reductase from Shewanella sediminis (strain HAW-EB3).